Consider the following 435-residue polypeptide: Trigger factor (435 aa).

Residues aspartate 161 to proline 246 form the PPIase FKBP-type domain.

Belongs to the FKBP-type PPIase family. Tig subfamily.

It localises to the cytoplasm. The catalysed reaction is [protein]-peptidylproline (omega=180) = [protein]-peptidylproline (omega=0). In terms of biological role, involved in protein export. Acts as a chaperone by maintaining the newly synthesized protein in an open conformation. Functions as a peptidyl-prolyl cis-trans isomerase. The polypeptide is Trigger factor (Psychromonas ingrahamii (strain DSM 17664 / CCUG 51855 / 37)).